A 111-amino-acid chain; its full sequence is Large ribosomal subunit protein uL23 (111 aa).

The protein belongs to the universal ribosomal protein uL23 family. Part of the 50S ribosomal subunit. Contacts protein L29, and trigger factor when it is bound to the ribosome.

In terms of biological role, one of the early assembly proteins it binds 23S rRNA. One of the proteins that surrounds the polypeptide exit tunnel on the outside of the ribosome. Forms the main docking site for trigger factor binding to the ribosome. This Chlamydia trachomatis serovar L2 (strain ATCC VR-902B / DSM 19102 / 434/Bu) protein is Large ribosomal subunit protein uL23.